A 282-amino-acid polypeptide reads, in one-letter code: Bifunctional protein FolD (282 aa).

Residues 165–167, Ser190, and Thr231 contribute to the NADP(+) site; that span reads GRS.

This sequence belongs to the tetrahydrofolate dehydrogenase/cyclohydrolase family. Homodimer.

The enzyme catalyses (6R)-5,10-methylene-5,6,7,8-tetrahydrofolate + NADP(+) = (6R)-5,10-methenyltetrahydrofolate + NADPH. The catalysed reaction is (6R)-5,10-methenyltetrahydrofolate + H2O = (6R)-10-formyltetrahydrofolate + H(+). It participates in one-carbon metabolism; tetrahydrofolate interconversion. Functionally, catalyzes the oxidation of 5,10-methylenetetrahydrofolate to 5,10-methenyltetrahydrofolate and then the hydrolysis of 5,10-methenyltetrahydrofolate to 10-formyltetrahydrofolate. The chain is Bifunctional protein FolD from Clostridium beijerinckii (strain ATCC 51743 / NCIMB 8052) (Clostridium acetobutylicum).